A 450-amino-acid chain; its full sequence is tRNA modification GTPase MnmE (450 aa).

(6S)-5-formyl-5,6,7,8-tetrahydrofolate contacts are provided by Lys-21, Glu-78, and Lys-117. Residues 213–376 (GHALSIIGKP…LSQKISAFFP (164 aa)) enclose the TrmE-type G domain. Asn-223 is a binding site for K(+). GTP contacts are provided by residues 223 to 228 (NAGKSS), 242 to 248 (SDIKGTT), and 267 to 270 (DTAG). Ser-227 contacts Mg(2+). Ser-242, Ile-244, and Thr-247 together coordinate K(+). Thr-248 serves as a coordination point for Mg(2+). Lys-450 contacts (6S)-5-formyl-5,6,7,8-tetrahydrofolate.

It belongs to the TRAFAC class TrmE-Era-EngA-EngB-Septin-like GTPase superfamily. TrmE GTPase family. In terms of assembly, homodimer. Heterotetramer of two MnmE and two MnmG subunits. K(+) serves as cofactor.

It is found in the cytoplasm. In terms of biological role, exhibits a very high intrinsic GTPase hydrolysis rate. Involved in the addition of a carboxymethylaminomethyl (cmnm) group at the wobble position (U34) of certain tRNAs, forming tRNA-cmnm(5)s(2)U34. The chain is tRNA modification GTPase MnmE from Helicobacter acinonychis (strain Sheeba).